A 367-amino-acid polypeptide reads, in one-letter code: Glutamate 5-kinase (367 aa).

K10 serves as a coordination point for ATP. 3 residues coordinate substrate: S50, D137, and N149. ATP-binding positions include T169–D170 and T211–K217. The PUA domain occupies A275–E353.

Belongs to the glutamate 5-kinase family.

The protein localises to the cytoplasm. It catalyses the reaction L-glutamate + ATP = L-glutamyl 5-phosphate + ADP. Its pathway is amino-acid biosynthesis; L-proline biosynthesis; L-glutamate 5-semialdehyde from L-glutamate: step 1/2. Catalyzes the transfer of a phosphate group to glutamate to form L-glutamate 5-phosphate. In Escherichia coli O81 (strain ED1a), this protein is Glutamate 5-kinase.